A 237-amino-acid chain; its full sequence is Thiamine-phosphate synthase (237 aa).

4-amino-2-methyl-5-(diphosphooxymethyl)pyrimidine is bound by residues 57-61 and asparagine 98; that span reads QLRDK. Positions 99 and 118 each coordinate Mg(2+). Serine 136 lines the 4-amino-2-methyl-5-(diphosphooxymethyl)pyrimidine pocket. 162–164 contacts 2-[(2R,5Z)-2-carboxy-4-methylthiazol-5(2H)-ylidene]ethyl phosphate; that stretch reads TPT. Residue lysine 165 participates in 4-amino-2-methyl-5-(diphosphooxymethyl)pyrimidine binding. Glycine 193 is a binding site for 2-[(2R,5Z)-2-carboxy-4-methylthiazol-5(2H)-ylidene]ethyl phosphate.

It belongs to the thiamine-phosphate synthase family. Mg(2+) is required as a cofactor.

The enzyme catalyses 2-[(2R,5Z)-2-carboxy-4-methylthiazol-5(2H)-ylidene]ethyl phosphate + 4-amino-2-methyl-5-(diphosphooxymethyl)pyrimidine + 2 H(+) = thiamine phosphate + CO2 + diphosphate. The catalysed reaction is 2-(2-carboxy-4-methylthiazol-5-yl)ethyl phosphate + 4-amino-2-methyl-5-(diphosphooxymethyl)pyrimidine + 2 H(+) = thiamine phosphate + CO2 + diphosphate. It catalyses the reaction 4-methyl-5-(2-phosphooxyethyl)-thiazole + 4-amino-2-methyl-5-(diphosphooxymethyl)pyrimidine + H(+) = thiamine phosphate + diphosphate. Its pathway is cofactor biosynthesis; thiamine diphosphate biosynthesis; thiamine phosphate from 4-amino-2-methyl-5-diphosphomethylpyrimidine and 4-methyl-5-(2-phosphoethyl)-thiazole: step 1/1. Condenses 4-methyl-5-(beta-hydroxyethyl)thiazole monophosphate (THZ-P) and 2-methyl-4-amino-5-hydroxymethyl pyrimidine pyrophosphate (HMP-PP) to form thiamine monophosphate (TMP). In Mycolicibacterium gilvum (strain PYR-GCK) (Mycobacterium gilvum (strain PYR-GCK)), this protein is Thiamine-phosphate synthase.